A 288-amino-acid polypeptide reads, in one-letter code: ATP synthase gamma chain (288 aa).

This sequence belongs to the ATPase gamma chain family. As to quaternary structure, F-type ATPases have 2 components, CF(1) - the catalytic core - and CF(0) - the membrane proton channel. CF(1) has five subunits: alpha(3), beta(3), gamma(1), delta(1), epsilon(1). CF(0) has three main subunits: a, b and c.

It localises to the cell inner membrane. In terms of biological role, produces ATP from ADP in the presence of a proton gradient across the membrane. The gamma chain is believed to be important in regulating ATPase activity and the flow of protons through the CF(0) complex. This Chromobacterium violaceum (strain ATCC 12472 / DSM 30191 / JCM 1249 / CCUG 213 / NBRC 12614 / NCIMB 9131 / NCTC 9757 / MK) protein is ATP synthase gamma chain.